The chain runs to 545 residues: MAELTISSDEIRSAIANYTSSYSPEASREEVGVVTTAADGIANVSGMPSVMANELLEFPGGVIGVAQNLDTDSVGVVVLGNYETLKEGDEVKRTGEVLSIPVGENFLGRVINPLGEPIDGLGDITDTEERALELQAPSVLMRQPVNEPMQTGIKAIDAMTPIGRGQRQLIIGDRKTGKTSVCIDTILNQRDNWESGDPSKQVRCIYVAIGQKGSTIASIRQTLEEHGALEYTTIVAAPASDSAGFKWLAPFAGAALGQHWMYQGKHVLVIYDDLTKQAEAYRAISLLLRRPPGREAYPGDVFYLHSRLLERAAKLNDELGGGSLTALPIIETKANDVSAFIPTNVISITDGQVFLESDLFNQGVRPAINVGVSVSRVGGDAQTKGMKKVSGNLRLDLAAYRDLEAFSAFASDLDDASKAQLERGERLVELLKQTEHAPQSVEHQMISIWLAGEGEFDDVPVEDVRRFEAELIEHLRSNASGVFDQIAGGTPFTEESQAQLKQSTSEFKRGFQTTDGTPIIREPEARAMEQDEVKQSEITVTRKTV.

172–179 (GDRKTGKT) is a binding site for ATP.

The protein belongs to the ATPase alpha/beta chains family. As to quaternary structure, F-type ATPases have 2 components, CF(1) - the catalytic core - and CF(0) - the membrane proton channel. CF(1) has five subunits: alpha(3), beta(3), gamma(1), delta(1), epsilon(1). CF(0) has three main subunits: a(1), b(2) and c(9-12). The alpha and beta chains form an alternating ring which encloses part of the gamma chain. CF(1) is attached to CF(0) by a central stalk formed by the gamma and epsilon chains, while a peripheral stalk is formed by the delta and b chains.

Its subcellular location is the cell membrane. It catalyses the reaction ATP + H2O + 4 H(+)(in) = ADP + phosphate + 5 H(+)(out). Functionally, produces ATP from ADP in the presence of a proton gradient across the membrane. The alpha chain is a regulatory subunit. This chain is ATP synthase subunit alpha, found in Corynebacterium urealyticum (strain ATCC 43042 / DSM 7109).